Reading from the N-terminus, the 215-residue chain is Ribonuclease T (215 aa).

Residues valine 20–phenylalanine 194 enclose the Exonuclease domain. Mg(2+) is bound by residues aspartate 23, glutamate 25, histidine 181, and aspartate 186. Histidine 181 functions as the Proton donor/acceptor in the catalytic mechanism.

Belongs to the RNase T family. In terms of assembly, homodimer. Mg(2+) is required as a cofactor.

In terms of biological role, trims short 3' overhangs of a variety of RNA species, leaving a one or two nucleotide 3' overhang. Responsible for the end-turnover of tRNA: specifically removes the terminal AMP residue from uncharged tRNA (tRNA-C-C-A). Also appears to be involved in tRNA biosynthesis. This is Ribonuclease T from Yersinia pseudotuberculosis serotype I (strain IP32953).